The chain runs to 924 residues: Cell division control protein 13 (924 aa).

The tract at residues 265–336 (PTTDISNMGE…KRKRKLSFHS (72 aa)) is disordered. Polar residues predominate over residues 295–308 (GKYFSSKSYIQSQT). S306 carries the phosphoserine modification. Residue T308 is modified to Phosphothreonine. Residues 309–326 (PERKTSVPNNWHDDDSGS) are compositionally biased toward basic and acidic residues. A Phosphoserine modification is found at S333. The OB DNA-binding region spans 500–686 (KMARKDPTIE…FEEYRRFFPI (187 aa)).

In terms of assembly, interacts with POL1, EST1, FUN12, STM1, STN1 and TEN1.

Its subcellular location is the chromosome. It localises to the telomere. In terms of biological role, single-stranded telomeric DNA-binding protein that regulates telomere replication. Has a role in both positive and negative regulation. Promotes [TG(1-3)] strand lengthening via interaction with EST1. Promotes [C(1-3)A] strand re-synthesis by DNA polymerase alpha via interaction with POL1. Negatively regulates telomere elongation of the G strand via binding with STN1 thereby inhibiting telomerase activity. This Saccharomyces cerevisiae (strain ATCC 204508 / S288c) (Baker's yeast) protein is Cell division control protein 13 (CDC13).